Consider the following 775-residue polypeptide: Subtilisin-like protease SBT4.1 (775 aa).

An N-terminal signal peptide occupies residues 1–23; sequence MAIAFHTFLLQLLLFFFASFAEA. Residue Asn24 is glycosylated (N-linked (GlcNAc...) asparagine). A propeptide spans 24 to 106 (activation peptide); that stretch reads NDSRKTYLVQ…VSRSRNLKLQ (83 aa). The 77-residue stretch at 29-105 folds into the Inhibitor I9 domain; that stretch reads TYLVQMKVGG…EVSRSRNLKL (77 aa). In terms of domain architecture, Peptidase S8 spans 110 to 606; the sequence is SWDFMNLTLK…SGHLNATKVR (497 aa). Asn115 and Asn126 each carry an N-linked (GlcNAc...) asparagine glycan. The active-site Charge relay system is Asp136. Residue Asn162 is glycosylated (N-linked (GlcNAc...) asparagine). The active-site Charge relay system is His196. One can recognise a PA domain in the interval 365–459; it reads FYPLLNEKAP…FLDEQKKGKL (95 aa). N-linked (GlcNAc...) asparagine glycosylation occurs at Asn437. Ser551 functions as the Charge relay system in the catalytic mechanism. Asn601 carries an N-linked (GlcNAc...) asparagine glycan.

This sequence belongs to the peptidase S8 family. Post-translationally, the C-terminal propeptide is autocleaved.

The protein resides in the secreted. The chain is Subtilisin-like protease SBT4.1 from Arabidopsis thaliana (Mouse-ear cress).